The chain runs to 185 residues: Shikimate kinase (185 aa).

12–17 contributes to the ATP binding site; sequence GSGKTT. Thr16 contacts Mg(2+). Residues Asp34, Arg58, and Gly79 each coordinate substrate. Arg116 contributes to the ATP binding site. A substrate-binding site is contributed by Arg135.

The protein belongs to the shikimate kinase family. In terms of assembly, monomer. It depends on Mg(2+) as a cofactor.

The protein localises to the cytoplasm. It catalyses the reaction shikimate + ATP = 3-phosphoshikimate + ADP + H(+). It functions in the pathway metabolic intermediate biosynthesis; chorismate biosynthesis; chorismate from D-erythrose 4-phosphate and phosphoenolpyruvate: step 5/7. In terms of biological role, catalyzes the specific phosphorylation of the 3-hydroxyl group of shikimic acid using ATP as a cosubstrate. The polypeptide is Shikimate kinase (Corynebacterium jeikeium (strain K411)).